Reading from the N-terminus, the 402-residue chain is Zinc finger protein 322 (402 aa).

The C2H2-type 1; atypical zinc finger occupies 43 to 65 (YQCLECKQNFCENLALIMCERTH). 8 consecutive C2H2-type zinc fingers follow at residues 71–93 (YKCD…QRIH), 99–121 (YKCS…QRTH), 127–149 (YTCD…QRSH), 155–177 (YLCS…RRTH), 183–205 (FKCL…QRTH), 211–233 (YKCN…KRVH), 239–261 (YKCG…QRVH), and 267–289 (YKCL…QATH). The C2H2-type 10; degenerate zinc-finger motif lies at 293 to 315 (FKCLEYEKSFNCSSDLIVHQRIH). The segment at 351–373 (YKYTVCDKSFHQSSALLQHQTVH) adopts a C2H2-type 11; degenerate zinc-finger fold. Position 391 is a phosphoserine (Ser391).

The protein belongs to the krueppel C2H2-type zinc-finger protein family. Interacts with POU5F1. In terms of tissue distribution, ubiquitous. Highly expressed in heart and skeletal muscle.

It localises to the cytoplasm. It is found in the nucleus. Its function is as follows. Transcriptional activator. Important for maintenance of pluripotency in embryonic stem cells. Binds directly to the POU5F1 distal enhancer and the NANOG proximal promoter, and enhances expression of both genes. Can also bind to numerous other gene promoters and regulates expression of many other pluripotency factors, either directly or indirectly. Promotes inhibition of MAPK signaling during embryonic stem cell differentiation. This chain is Zinc finger protein 322 (ZNF322), found in Homo sapiens (Human).